The chain runs to 92 residues: Small ribosomal subunit protein uS19 (92 aa).

The protein belongs to the universal ribosomal protein uS19 family.

In terms of biological role, protein S19 forms a complex with S13 that binds strongly to the 16S ribosomal RNA. The polypeptide is Small ribosomal subunit protein uS19 (Polaromonas naphthalenivorans (strain CJ2)).